The primary structure comprises 1098 residues: Probable DNA-directed RNA polymerase (1098 aa).

Positions 1-24 are enriched in basic and acidic residues; that stretch reads PIRESVRVSTDRDPDLEDEKREQL. The segment at 1–26 is disordered; that stretch reads PIRESVRVSTDRDPDLEDEKREQLGE. Catalysis depends on residues Asp663, Lys750, and Asp915.

It belongs to the phage and mitochondrial RNA polymerase family.

It is found in the mitochondrion. The enzyme catalyses RNA(n) + a ribonucleoside 5'-triphosphate = RNA(n+1) + diphosphate. In terms of biological role, DNA-dependent RNA polymerase catalyzes the transcription of DNA into RNA using the four ribonucleoside triphosphates as substrates. In Zea mays (Maize), this protein is Probable DNA-directed RNA polymerase.